The sequence spans 364 residues: MKALILVGGYGTRLRPLTLTQPKPLVEFANKPMMLHQMEALAAVGVDTVVLAVSYRAEQLEAEMTVHADRLGVKLIFSLEEEPLGTAGPLALARKHLEDDDPFFVLNSDVICDFPFKQMVEFHKQHGKEGTIAVTKVEEPSKYGVVVFKEDGKIDDFVEKPQEYVGNKINAGLYIFNSAILDRIPLKPTSIEKEIFPQMATSGNLYAYVLPGFWMDVGQPKDFLKGMSLFLNHVQTTRTGALATGSNIHGTATIRGSVLVDPSATVGENCVIGPDVVIGPRVQIEGGVRIQHSTILSDSTVGNYSWVSGSIIGRECHIGSWVRMENVCVLGDDVVVKDEVYLNEASVLPHKVIAVNVPSKDIIM.

Residues 2 to 220 form a substrate-binding domain region; sequence KALILVGGYG…PGFWMDVGQP (219 aa). A GDP-alpha-D-mannose-binding site is contributed by Asp-109. A Mg(2+)-binding site is contributed by Asp-109. The active site involves Lys-160. GDP-alpha-D-mannose is bound at residue Asp-216. Asp-216 lines the Mg(2+) pocket. The interval 243–364 is hexapeptide repeat domain; sequence ATGSNIHGTA…VNVPSKDIIM (122 aa).

It belongs to the transferase hexapeptide repeat family. As to quaternary structure, component of the GMPPA-GMPPB mannose-1-phosphate guanylyltransferase complex composed of 4 GMPPA subunits and 8 tag-335/GMPPB subunits; the complex is organized into three layers, a central layer made up of 2 GMPPA dimers sandwiched between two layers each made up of 2 tag-335/GMPPB dimers. Catalytic activity of tag-335/GMPPB is reduced when part of the complex and binding of GDP-alpha-D-Mannose by GMPPA induces allosteric feedback inhibition of tag-335/GMPPB. It depends on Mg(2+) as a cofactor.

It carries out the reaction alpha-D-mannose 1-phosphate + GTP + H(+) = GDP-alpha-D-mannose + diphosphate. It participates in nucleotide-sugar biosynthesis; GDP-alpha-D-mannose biosynthesis; GDP-alpha-D-mannose from alpha-D-mannose 1-phosphate (GTP route): step 1/1. Enzyme activity is reduced by incorporation into the GMPPA-GMPPB mannose-1-phosphate guanylyltransferase complex. Allosterically inhibited, when part of the GMPPA-GMPPB complex, by GDP-alpha-D-mannose binding to GMPPA. Functionally, catalytic subunit of the GMPPA-GMPPB mannose-1-phosphate guanylyltransferase complex. Catalyzes the formation of GDP-mannose, an essential precursor of glycan moieties of glycoproteins and glycolipids. Can catalyze the reverse reaction in vitro. Together with GMPPA regulates GDP-alpha-D-mannose levels. The polypeptide is Mannose-1-phosphate guanylyltransferase catalytic subunit beta (Caenorhabditis briggsae).